The chain runs to 138 residues: Probable glycine cleavage system H protein 1 (138 aa).

Residues 30–112 form the Lipoyl-binding domain; that stretch reads IATVGITDYA…YGRGWIFKLK (83 aa). Lysine 71 carries the post-translational modification N6-lipoyllysine.

This sequence belongs to the GcvH family. As to quaternary structure, the glycine cleavage system is composed of four proteins: P, T, L and H. (R)-lipoate serves as cofactor.

Functionally, the glycine cleavage system catalyzes the degradation of glycine. The H protein shuttles the methylamine group of glycine from the P protein to the T protein. The chain is Probable glycine cleavage system H protein 1 from Sulfolobus acidocaldarius (strain ATCC 33909 / DSM 639 / JCM 8929 / NBRC 15157 / NCIMB 11770).